Consider the following 768-residue polypeptide: MTAPFTPAEIAAEGIKPEEYEDIVQRLGRHPNKAELGMFGVMWSEHCCYKNSRPLLSNFPTEGERILVGPGENAGVVDLGDGLRLAFKIESHNHPSAVEPFQGAATGVGGILRDIFTMGARPIAILNSLRFGNLDDARNRRIFTGVVDGISHYGNCVGVPTVGGEIYFDPAYSGNPLVNAMALGLMETEEIVKAGASGIGNPVLYVGSTTGRDGMGGASFASAELTDQSMDDRPAVQVGDPFLEKSLIEACLEAFKSGAVVAAQDMGAAGITCSTAEMAAKGGVGIELDLDKIPVRETGMVPYEYLLSESQERMLFVAQPGREQELIDIFHRWGLQAVVAGQVIADPIVRIFFQGGIAAEIPATALADNTPIYHRQLLDQAPDYAQQAWQWQESDLSPAAIAGIEIAGQKQSWNEVLLTLLDSPTIASKHWVYRQYDHQVQNNTVIVPGGADAAVVRVRPLDAKPEECVIGVAATTDCNARYVYLNPLEGAKAAVAEAARNLSCVGAEPLAVTDNLNFGSPENPVGYWQLALACEGIAEGCRQLNTPVTGGNVSLYNETLDSNGRPQPIYPTPVIGMVGRVENINKVVGQGWRNSGNGIYLLGSNDGNTLGGSEYLAVVHHTVAGQPPQVDFDLEKAVQKACRHGIAQGWVNAAHDCAEGGLSVALAEMAIASQLGAEINLPDSDQRLDNLLFGESASRIVVAVAPEHQPAWENYLAGQSLPWQKLGVVGTAQGNLTFIDAQNNALIDLPVSALTEPWQTAIARRLKS.

His46 is a catalytic residue. Positions 49 and 88 each coordinate ATP. Position 90 (Glu90) interacts with Mg(2+). Residues 91–94 and Arg113 each bind substrate; that span reads SHNH. His92 functions as the Proton acceptor in the catalytic mechanism. A Mg(2+)-binding site is contributed by Asp114. Gln237 provides a ligand contact to substrate. Position 265 (Asp265) interacts with Mg(2+). 309–311 is a substrate binding site; sequence ESQ. ATP-binding residues include Asp514 and Gly551. Asn552 lines the Mg(2+) pocket. A substrate-binding site is contributed by Ser554.

Belongs to the FGAMS family. As to quaternary structure, monomer. Part of the FGAM synthase complex composed of 1 PurL, 1 PurQ and 2 PurS subunits.

Its subcellular location is the cytoplasm. It carries out the reaction N(2)-formyl-N(1)-(5-phospho-beta-D-ribosyl)glycinamide + L-glutamine + ATP + H2O = 2-formamido-N(1)-(5-O-phospho-beta-D-ribosyl)acetamidine + L-glutamate + ADP + phosphate + H(+). The protein operates within purine metabolism; IMP biosynthesis via de novo pathway; 5-amino-1-(5-phospho-D-ribosyl)imidazole from N(2)-formyl-N(1)-(5-phospho-D-ribosyl)glycinamide: step 1/2. Part of the phosphoribosylformylglycinamidine synthase complex involved in the purines biosynthetic pathway. Catalyzes the ATP-dependent conversion of formylglycinamide ribonucleotide (FGAR) and glutamine to yield formylglycinamidine ribonucleotide (FGAM) and glutamate. The FGAM synthase complex is composed of three subunits. PurQ produces an ammonia molecule by converting glutamine to glutamate. PurL transfers the ammonia molecule to FGAR to form FGAM in an ATP-dependent manner. PurS interacts with PurQ and PurL and is thought to assist in the transfer of the ammonia molecule from PurQ to PurL. The polypeptide is Phosphoribosylformylglycinamidine synthase subunit PurL (Synechocystis sp. (strain ATCC 27184 / PCC 6803 / Kazusa)).